Consider the following 259-residue polypeptide: 5'-nucleotidase SurE (259 aa).

Positions 13, 14, 44, and 101 each coordinate a divalent metal cation.

This sequence belongs to the SurE nucleotidase family. The cofactor is a divalent metal cation.

It localises to the cytoplasm. The enzyme catalyses a ribonucleoside 5'-phosphate + H2O = a ribonucleoside + phosphate. Its function is as follows. Nucleotidase that shows phosphatase activity on nucleoside 5'-monophosphates. This Flavobacterium johnsoniae (strain ATCC 17061 / DSM 2064 / JCM 8514 / BCRC 14874 / CCUG 350202 / NBRC 14942 / NCIMB 11054 / UW101) (Cytophaga johnsonae) protein is 5'-nucleotidase SurE.